The following is a 90-amino-acid chain: MNKSELIDAIAASADIPKAVAGRALDAVIESVTGALKAGDSVVLVGFGTFAVKERAARTGRNPQTGKPIKIAAAKIPGFKAGKALKDAVN.

Belongs to the bacterial histone-like protein family. In terms of assembly, heterodimer of an alpha and a beta chain.

Its function is as follows. Histone-like DNA-binding protein which is capable of wrapping DNA to stabilize it, and thus to prevent its denaturation under extreme environmental conditions. The sequence is that of DNA-binding protein HU-beta (hupB) from Pseudomonas aeruginosa (strain ATCC 15692 / DSM 22644 / CIP 104116 / JCM 14847 / LMG 12228 / 1C / PRS 101 / PAO1).